A 457-amino-acid polypeptide reads, in one-letter code: Argininosuccinate lyase (457 aa).

Belongs to the lyase 1 family. Argininosuccinate lyase subfamily.

The protein localises to the cytoplasm. It catalyses the reaction 2-(N(omega)-L-arginino)succinate = fumarate + L-arginine. It participates in amino-acid biosynthesis; L-arginine biosynthesis; L-arginine from L-ornithine and carbamoyl phosphate: step 3/3. The sequence is that of Argininosuccinate lyase from Escherichia coli O157:H7.